The primary structure comprises 141 residues: Small ribosomal subunit protein bS6 (141 aa).

Residues 110–141 (SRTKVSDQPAAVEAAEAPAAPAAQEESAPASA) form a disordered region. A compositionally biased stretch (low complexity) spans 117-141 (QPAAVEAAEAPAAPAAQEESAPASA).

This sequence belongs to the bacterial ribosomal protein bS6 family.

Its function is as follows. Binds together with bS18 to 16S ribosomal RNA. This is Small ribosomal subunit protein bS6 from Acidobacterium capsulatum (strain ATCC 51196 / DSM 11244 / BCRC 80197 / JCM 7670 / NBRC 15755 / NCIMB 13165 / 161).